The following is a 785-amino-acid chain: Protein kintoun (785 aa).

Basic and acidic residues-rich tracts occupy residues Glu622–Ser638 and His662–Lys679. Disordered regions lie at residues Glu622 to Leu698 and Lys719 to Asn749. Residues Thr681–Asp695 are compositionally biased toward polar residues. Residues Ser728 to Asp737 are compositionally biased toward acidic residues.

Belongs to the PIH1 family. Kintoun subfamily.

The protein localises to the cytoplasm. It localises to the dynein axonemal particle. In terms of biological role, required for cytoplasmic pre-assembly of axonemal dyneins, thereby playing a central role in motility in cilia and flagella. Involved in pre-assembly of dynein arm complexes in the cytoplasm before intraflagellar transport loads them for the ciliary compartment. In Xenopus tropicalis (Western clawed frog), this protein is Protein kintoun.